A 216-amino-acid chain; its full sequence is Imidazole glycerol phosphate synthase subunit HisH (216 aa).

Residues 2–216 (RVAIIDYGSG…LISNFLRWKP (215 aa)) form the Glutamine amidotransferase type-1 domain. Cys88 (nucleophile) is an active-site residue. Active-site residues include His196 and Glu198.

As to quaternary structure, heterodimer of HisH and HisF.

It is found in the cytoplasm. It carries out the reaction 5-[(5-phospho-1-deoxy-D-ribulos-1-ylimino)methylamino]-1-(5-phospho-beta-D-ribosyl)imidazole-4-carboxamide + L-glutamine = D-erythro-1-(imidazol-4-yl)glycerol 3-phosphate + 5-amino-1-(5-phospho-beta-D-ribosyl)imidazole-4-carboxamide + L-glutamate + H(+). The catalysed reaction is L-glutamine + H2O = L-glutamate + NH4(+). It participates in amino-acid biosynthesis; L-histidine biosynthesis; L-histidine from 5-phospho-alpha-D-ribose 1-diphosphate: step 5/9. Its function is as follows. IGPS catalyzes the conversion of PRFAR and glutamine to IGP, AICAR and glutamate. The HisH subunit catalyzes the hydrolysis of glutamine to glutamate and ammonia as part of the synthesis of IGP and AICAR. The resulting ammonia molecule is channeled to the active site of HisF. In Rhizobium meliloti (strain 1021) (Ensifer meliloti), this protein is Imidazole glycerol phosphate synthase subunit HisH.